Consider the following 1705-residue polypeptide: ALK tyrosine kinase receptor (1705 aa).

A signal peptide spans 1–21 (MIARILYFFLWSAAFLPELQC). Topologically, residues 22–1035 (ASQRTADALT…SLSHLALGLS (1014 aa)) are extracellular. Asparagine 40 and asparagine 48 each carry an N-linked (GlcNAc...) asparagine glycan. Residues 54–76 (RIKRKTLSVDFAVPSLLRYYLAL) are heparin-binding region. Residues asparagine 124, asparagine 259, asparagine 334, asparagine 434, asparagine 442, asparagine 458, asparagine 484, asparagine 578, asparagine 590, and asparagine 635 are each glycosylated (N-linked (GlcNAc...) asparagine). The MAM domain occupies 486-644 (SYCSFGREDC…NFTLSMECFL (159 aa)). A disulfide bridge connects residues cysteine 694 and cysteine 707. N-linked (GlcNAc...) asparagine glycosylation occurs at asparagine 717. The cysteines at positions 788 and 799 are disulfide-linked. N-linked (GlcNAc...) asparagine glycosylation is found at asparagine 808 and asparagine 881. Positions 842–892 (GGGRGYSSQSETPEEVMDRDPSIPGRNGKSGTAGGGGGWNDSAPVPQGGRP) are disordered. Cysteine 903 and cysteine 921 are joined by a disulfide. The N-linked (GlcNAc...) asparagine glycan is linked to asparagine 979. 2 disulfides stabilise this stretch: cysteine 980-cysteine 988 and cysteine 983-cysteine 997. The tract at residues 980-1016 (CSHCESGDCHETSEGMVCYCDEELTLAPDGVSCINST) is EGF-like. A glycan (N-linked (GlcNAc...) asparagine) is linked at asparagine 1014. Residues 1036 to 1056 (VGTSALIAALLLAVSGVMIMY) traverse the membrane as a helical segment. At 1057–1705 (RRKHTELQSI…KMEGHNATVL (649 aa)) the chain is on the cytoplasmic side. The Protein kinase domain maps to 1113-1389 (ISLTRGLGHG…IDYCLQDPDV (277 aa)). Residues 1119-1127 (LGHGAFGEV) and lysine 1147 contribute to the ATP site. Aspartate 1246 serves as the catalytic Proton acceptor. Disordered regions lie at residues 1395-1499 (PVEY…GHVN), 1505-1524 (AHSS…WNPT), 1532-1557 (QQQK…GQEQ), 1588-1613 (QQQQ…PAPT), and 1646-1681 (GLPM…DSRP). Polar residues predominate over residues 1484–1493 (KPSSTTSNAQ). 2 stretches are compositionally biased toward low complexity: residues 1532–1544 (QQQK…AQRQ) and 1588–1602 (QQQQ…LCRP). Over residues 1603–1613 (LLPPPPPPAPT) the composition is skewed to pro residues.

This sequence belongs to the protein kinase superfamily. Tyr protein kinase family. Insulin receptor subfamily. Homodimer; homodimerizes upon binding to alkal ligands (alkal1, alkal2a or alkal2b). Highly expressed in the developing central nervous system: highly expressed in brain, with much lower expression in heart, caudal fin and testis.

Its subcellular location is the cell membrane. The catalysed reaction is L-tyrosyl-[protein] + ATP = O-phospho-L-tyrosyl-[protein] + ADP + H(+). Its activity is regulated as follows. Inhibited by ALK inhibitor TAE684. In terms of biological role, receptor tyrosine kinase required for neurogenesis in the developing central nervous system. Following activation by alkal ligands (alkal1, alkal2a or alkal2b) at the cell surface, transduces an extracellular signal into an intracellular response. Ligand-binding to the extracellular domain induces tyrosine kinase activation, resulting in the activation of the mitogen-activated protein kinase (MAPK) pathway. Phosphorylates almost exclusively at the first tyrosine of the Y-x-x-x-Y-Y motif. This Danio rerio (Zebrafish) protein is ALK tyrosine kinase receptor.